A 654-amino-acid polypeptide reads, in one-letter code: NADPH-dependent diflavin oxidoreductase 1 (654 aa).

The Flavodoxin-like domain maps to 14–166 (ALVLYGSETG…TFIPWITDFR (153 aa)). FMN contacts are provided by residues 20 to 25 (SETGNA), 75 to 78 (STTG), and 113 to 122 (LGDSSYPKFN). The FAD-binding FR-type domain occupies 235 to 485 (PDALTATLVE…QLQRGGLSSS (251 aa)). FAD is bound by residues R389, 419–422 (RQFS), and 458–461 (GVCT). NADP(+) is bound by residues T500, 568-569 (SR), and 574-578 (KIYVQ). W654 is an FAD binding site.

The protein belongs to the NADPH-dependent diflavin oxidoreductase NDOR1 family. In the N-terminal section; belongs to the flavodoxin family. It in the C-terminal section; belongs to the flavoprotein pyridine nucleotide cytochrome reductase family. In terms of assembly, interacts with dre2; as part of the cytosolic iron-sulfur (Fe-S) protein assembly (CIA) machinery. It depends on FAD as a cofactor. FMN serves as cofactor.

The protein resides in the cytoplasm. The protein localises to the mitochondrion. The catalysed reaction is 2 oxidized [2Fe-2S]-[protein] + NADPH = 2 reduced [2Fe-2S]-[protein] + NADP(+) + H(+). NADPH-dependent reductase which is a central component of the cytosolic iron-sulfur (Fe-S) protein assembly (CIA) machinery. Transfers electrons from NADPH via its FAD and FMN prosthetic groups to the [2Fe-2S] cluster of dre2, another key component of the CIA machinery. In turn, this reduced cluster provides electrons for assembly of cytosolic iron-sulfur cluster proteins. Positively controls H(2)O(2)-induced cell death. This is NADPH-dependent diflavin oxidoreductase 1 from Aspergillus fumigatus (strain ATCC MYA-4609 / CBS 101355 / FGSC A1100 / Af293) (Neosartorya fumigata).